We begin with the raw amino-acid sequence, 172 residues long: Adenine phosphoribosyltransferase (172 aa).

The protein belongs to the purine/pyrimidine phosphoribosyltransferase family. Homodimer.

It is found in the cytoplasm. It catalyses the reaction AMP + diphosphate = 5-phospho-alpha-D-ribose 1-diphosphate + adenine. Its pathway is purine metabolism; AMP biosynthesis via salvage pathway; AMP from adenine: step 1/1. Functionally, catalyzes a salvage reaction resulting in the formation of AMP, that is energically less costly than de novo synthesis. This Levilactobacillus brevis (strain ATCC 367 / BCRC 12310 / CIP 105137 / JCM 1170 / LMG 11437 / NCIMB 947 / NCTC 947) (Lactobacillus brevis) protein is Adenine phosphoribosyltransferase.